Reading from the N-terminus, the 285-residue chain is Diaminopimelate epimerase (285 aa).

Residues Asn-15 and Asn-68 each coordinate substrate. Cys-77 acts as the Proton donor in catalysis. Residues 78-79 (GN), Asn-165, Asn-201, and 219-220 (ER) each bind substrate. Residue Cys-228 is the Proton acceptor of the active site. A substrate-binding site is contributed by 229–230 (GT).

Belongs to the diaminopimelate epimerase family. As to quaternary structure, homodimer.

It is found in the cytoplasm. It catalyses the reaction (2S,6S)-2,6-diaminopimelate = meso-2,6-diaminopimelate. The protein operates within amino-acid biosynthesis; L-lysine biosynthesis via DAP pathway; DL-2,6-diaminopimelate from LL-2,6-diaminopimelate: step 1/1. Functionally, catalyzes the stereoinversion of LL-2,6-diaminopimelate (L,L-DAP) to meso-diaminopimelate (meso-DAP), a precursor of L-lysine and an essential component of the bacterial peptidoglycan. This chain is Diaminopimelate epimerase, found in Synechococcus sp. (strain JA-2-3B'a(2-13)) (Cyanobacteria bacterium Yellowstone B-Prime).